Reading from the N-terminus, the 196-residue chain is Transmembrane 4 L6 family member 5 (196 aa).

Over 1 to 9 (MCTGKCARF) the chain is Cytoplasmic. Residues 10-30 (VGLSLIPLSLVCIVANALLLV) form a helical membrane-spanning segment. Over 31-45 (PNGQTTWTKDHLSLQ) the chain is Extracellular. The chain crosses the membrane as a helical span at residues 46–66 (VWLMAGFVGGGLMVLCPGISA). At 67-89 (VRAGGKGCCGAGCCGNRCRMLRS) the chain is on the cytoplasmic side. A helical membrane pass occupies residues 90 to 110 (VFCSAIGLLGAIYCLSVSGTG). Positions 90–196 (VFCSAIGLLG…DCRKKQGSSQ (107 aa)) are interaction with MTOR and CASTOR1. Residues 111–156 (LRIGPQCLMNGSWDYHFQDTAGSYLLNRTQWNLCVEPPDVVLWNVT) lie on the Extracellular side of the membrane. A glycan (N-linked (GlcNAc...) asparagine) is linked at asparagine 120. Residue 123–128 (WDYHFQ) participates in L-arginine binding. Asparagine 137 and asparagine 154 each carry an N-linked (GlcNAc...) asparagine glycan. The chain crosses the membrane as a helical span at residues 157 to 177 (LFSLLVAASCLEILLCGVQLV). The Cytoplasmic segment spans residues 178–196 (NASIGVLCGDCRKKQGSSQ).

This sequence belongs to the L6 tetraspanin family. Interacts with MTOR; the interaction is positively regulated by arginine and is negatively regulated by leucine. Interacts with SLC38A9. Interacts with SLC7A1; the interaction is negatively regulated by arginine. Interacts with CASTOR1; the interaction is positively regulated by leucine and is negatively regulated by arginine.

Its subcellular location is the lysosome membrane. It is found in the cell membrane. Functionally, acts as a lysosomal membrane arginine sensor. Forms a complex with MTOR and SLC38A9 on lysosomal membranes in an arginine-regulated manner, leading to arginine efflux which enables the activation of mTORC1 which subsequently leads to RPS6KB1 and EIF4EBP1 phosphorylations. Facilitates cell cycle G1/S phase progression and the translocation of the CDK4-CCND1 complex into the nucleus. CDKN1B and RHOA/ROCK signaling activity are involved in TM4SF5-mediated acceleration of G1/S phase progression. The polypeptide is Transmembrane 4 L6 family member 5 (TM4SF5) (Bos taurus (Bovine)).